Reading from the N-terminus, the 476-residue chain is tRNA-2-methylthio-N(6)-dimethylallyladenosine synthase (476 aa).

The MTTase N-terminal domain maps to 5 to 122 (KKLYIKTWGC…LPEMINQVKG (118 aa)). Positions 14, 51, 85, 159, 163, and 166 each coordinate [4Fe-4S] cluster. The Radical SAM core domain occupies 145-377 (RAEGPSAFVS…QQRINQQAMS (233 aa)). The TRAM domain occupies 380–443 (RAMLGSVQRI…ANSLRGKVIR (64 aa)).

Belongs to the methylthiotransferase family. MiaB subfamily. As to quaternary structure, monomer. Requires [4Fe-4S] cluster as cofactor.

The protein localises to the cytoplasm. It carries out the reaction N(6)-dimethylallyladenosine(37) in tRNA + (sulfur carrier)-SH + AH2 + 2 S-adenosyl-L-methionine = 2-methylsulfanyl-N(6)-dimethylallyladenosine(37) in tRNA + (sulfur carrier)-H + 5'-deoxyadenosine + L-methionine + A + S-adenosyl-L-homocysteine + 2 H(+). Catalyzes the methylthiolation of N6-(dimethylallyl)adenosine (i(6)A), leading to the formation of 2-methylthio-N6-(dimethylallyl)adenosine (ms(2)i(6)A) at position 37 in tRNAs that read codons beginning with uridine. The polypeptide is tRNA-2-methylthio-N(6)-dimethylallyladenosine synthase (Photorhabdus laumondii subsp. laumondii (strain DSM 15139 / CIP 105565 / TT01) (Photorhabdus luminescens subsp. laumondii)).